Consider the following 514-residue polypeptide: MQQLNPAEISNLIKQRIQDLDAGATAKNEGTIVKVSDGIVQIHGLEDAMYGEMIEFEGEVYGMALNLERDSVGAVVLGDFLKLQEGQKAYCTGRILEVPVGPELLGRVVDALGNPIDGKGPINAKMTDKVEKIAPGVIDRQSVDQPVMTGYKSVDTMIPIGRGQRELIIGDRQTGKTAMAIDAIIAQKASGIKCVYVAIGQKRSTIANVVRKLEQTGALEYTTVVVASASEPAALQYIAPYSGCTMGEYFRDRGEDALIVFDDLSKQAVAYRQISLLLRRPPGREAYPGDVFYLHSRLLERASRVNAAYVEKFTNGEVVGKTGSLTALPIIETQAGDVSAFVPTNVISITDGQIFLESSLFNSGIRPAVNAGISVSRVGGAAQTKIIKKLSGGIRTALAQYRELAAFAQFASDLDDATREQLDHGERVTELMKQKQYQPMSISEQAAVIYASNEGFLADVPVEKIGSFEEAYLRYMHDEQADLMKEIDDTANYNDDIAGRLKLSLETFKQNHSY.

An ATP-binding site is contributed by 170–177; that stretch reads GDRQTGKT.

The protein belongs to the ATPase alpha/beta chains family. In terms of assembly, F-type ATPases have 2 components, CF(1) - the catalytic core - and CF(0) - the membrane proton channel. CF(1) has five subunits: alpha(3), beta(3), gamma(1), delta(1), epsilon(1). CF(0) has three main subunits: a(1), b(2) and c(9-12). The alpha and beta chains form an alternating ring which encloses part of the gamma chain. CF(1) is attached to CF(0) by a central stalk formed by the gamma and epsilon chains, while a peripheral stalk is formed by the delta and b chains.

It localises to the cell inner membrane. It catalyses the reaction ATP + H2O + 4 H(+)(in) = ADP + phosphate + 5 H(+)(out). Functionally, produces ATP from ADP in the presence of a proton gradient across the membrane. The alpha chain is a regulatory subunit. In Psychrobacter arcticus (strain DSM 17307 / VKM B-2377 / 273-4), this protein is ATP synthase subunit alpha.